Reading from the N-terminus, the 626-residue chain is Chaperone protein HtpG (626 aa).

The tract at residues 1–339 is a; substrate-binding; it reads MSQNQETRGF…SNDLPLNVSR (339 aa). A b region spans residues 340 to 555; that stretch reads EILQDNKITA…NDQMTTQMAK (216 aa). Residues 556-626 form a c region; that stretch reads LFAAAGQPVP…FIKRINKLLG (71 aa).

Belongs to the heat shock protein 90 family. Homodimer.

Its subcellular location is the cytoplasm. Its function is as follows. Molecular chaperone. Has ATPase activity. The sequence is that of Chaperone protein HtpG from Haemophilus influenzae (strain ATCC 51907 / DSM 11121 / KW20 / Rd).